The primary structure comprises 257 residues: Diphthine synthase (257 aa).

Residues isoleucine 11, aspartate 89, isoleucine 92, 117–118, leucine 169, leucine 210, and histidine 235 contribute to the S-adenosyl-L-methionine site; that span reads SV.

This sequence belongs to the diphthine synthase family. In terms of assembly, homodimer.

It carries out the reaction 2-[(3S)-amino-3-carboxypropyl]-L-histidyl-[translation elongation factor 2] + 3 S-adenosyl-L-methionine = diphthine-[translation elongation factor 2] + 3 S-adenosyl-L-homocysteine + 3 H(+). Its pathway is protein modification; peptidyl-diphthamide biosynthesis. Its function is as follows. S-adenosyl-L-methionine-dependent methyltransferase that catalyzes the trimethylation of the amino group of the modified target histidine residue in translation elongation factor 2 (EF-2), to form an intermediate called diphthine. The three successive methylation reactions represent the second step of diphthamide biosynthesis. The sequence is that of Diphthine synthase from Saccharolobus solfataricus (strain ATCC 35092 / DSM 1617 / JCM 11322 / P2) (Sulfolobus solfataricus).